A 142-amino-acid polypeptide reads, in one-letter code: Large ribosomal subunit protein uL13 (142 aa).

This sequence belongs to the universal ribosomal protein uL13 family. Part of the 50S ribosomal subunit.

Its function is as follows. This protein is one of the early assembly proteins of the 50S ribosomal subunit, although it is not seen to bind rRNA by itself. It is important during the early stages of 50S assembly. This chain is Large ribosomal subunit protein uL13, found in Shewanella baltica (strain OS223).